Here is a 246-residue protein sequence, read N- to C-terminus: Neurotrophic factor BDNF precursor form (246 aa).

A signal peptide spans 1–18 (MTILFLTMVISYLSCMKA). Residues 19-127 (TPMKEVSIRG…AANMSMRVRR (109 aa)) constitute a propeptide that is removed on maturation. N-linked (GlcNAc...) asparagine glycosylation is present at Asn120. Cystine bridges form between Cys140-Cys207, Cys185-Cys236, and Cys195-Cys238.

Belongs to the NGF-beta family.

The protein resides in the secreted. Its function is as follows. Promotes the survival of neuronal populations that are all located either in the central nervous system or directly connected to it. The chain is Neurotrophic factor BDNF precursor form (BDNF) from Ptyas major (Chinese green snake).